The following is a 710-amino-acid chain: Adenylosuccinate synthetase (710 aa).

Disordered regions lie at residues 1–57 (MPVR…NHAK) and 82–112 (MDDE…SAQC). Residues 11-25 (NNSSSGVSNALSSSS) are compositionally biased toward low complexity. Residues 32-43 (SPSSRENSTPLS) are compositionally biased toward polar residues. Residues 180–186 (GDEGKGK) and 210–212 (GHT) each bind GTP. The active-site Proton acceptor is the Asp-181. Asp-181 and Gly-210 together coordinate Mg(2+). Residues 181–184 (DEGK), 208–211 (NAGH), Thr-295, Lys-309, Gln-421, Thr-437, and Lys-567 contribute to the IMP site. The Proton donor role is filled by His-211. Residue 563 to 569 (AVTKKPR) participates in substrate binding. Residues Arg-569 and 697 to 699 (GNG) each bind GTP.

It belongs to the adenylosuccinate synthetase family. Homodimer. Mg(2+) serves as cofactor.

The protein resides in the cytoplasm. It catalyses the reaction IMP + L-aspartate + GTP = N(6)-(1,2-dicarboxyethyl)-AMP + GDP + phosphate + 2 H(+). Its pathway is purine metabolism; AMP biosynthesis via de novo pathway; AMP from IMP: step 1/2. Its function is as follows. Plays an important role in the salvage pathway for purine nucleotide biosynthesis. Catalyzes the first committed step in the biosynthesis of AMP from IMP. The chain is Adenylosuccinate synthetase from Leishmania braziliensis.